The primary structure comprises 121 residues: MLTKKEQRLRRSRQTRIRIAQQGVARLTVNRTNLHIYANVISDDGSKVLASASTAEAEVRQSLGAAGKGGNAAAARIIGLRIAEKAKAAGIQKVAFDRAGFAYHGRVKALADAAREAGLQF.

The protein belongs to the universal ribosomal protein uL18 family. In terms of assembly, part of the 50S ribosomal subunit; part of the 5S rRNA/L5/L18/L25 subcomplex. Contacts the 5S and 23S rRNAs.

In terms of biological role, this is one of the proteins that bind and probably mediate the attachment of the 5S RNA into the large ribosomal subunit, where it forms part of the central protuberance. In Verminephrobacter eiseniae (strain EF01-2), this protein is Large ribosomal subunit protein uL18.